Reading from the N-terminus, the 1149-residue chain is MPTMRRTVSEIRSRAEGYEKTDDVSEKTSLADQEEIRTIFINQPQLTKFCNNHVSTAKYNIITFLPRFLYSQFRRAANSFFLFIALLQQIPDVSPTGRYTTLVPLLFILAVAAIKEIIEDIKRHKADNAVNKKQTQVLRNGAWEIVHWEKVNVGDIVIIKGKEYIPADTVLLSSSEPQAMCYIETSNLDGETNLKIRQGLPATSDIKDIDSLMRLSGRIECESPNRHLYDFVGNIRLDGRSTVPLGADQILLRGAQLRNTQWVHGIVVYTGHDTKLMQNSTSPPLKLSNVERITNVQILILFCILIAMSLVCSVGSAIWNRRHSGRDWYLNLNYGGANNFGLNFLTFIILFNNLIPISLLVTLEVVKFTQAYFINWDLDMHYEPTDTAAMARTSNLNVELGQVKYIFSDKTGTLTCNVMQFKKCTIAGVAYGQNSQFGDEKTFSDSSLLENLQNNHPTAPIICEFLTMMAVCHTAVPEREGDKIIYQAASPDEGALVRAAKQLNFVFTGRTPDSVIIDSLGQEERYELLNVLEFTSARKRMSVIVRTPSGKLRLYCKGADTVIYDRLAETSKYKEITLKHLEQFATEGLRTLCFAVAEISESDFQEWRAVYHRASTSVQNRLLKLEESYELIEKNLQLLGATAIEDKLQDQVPETIETLMKADIKIWILTGDKQETAINIGHSCKLRRKNMGMIVINEGSLDGTRETLSRHCTTLGDALRKENDFALIIDGKTLKYALTFGVRQYFLDLALSCKAVICCRVSPLQKSEVVEMVKKQVKVITLAIGDGANDVSMIQTAHVGVGISGNEGLQAANSSDYSIAQFKYLKNLLMVHGAWNYNRGSKCILYCFYKNIVLYIIEIWFAFVNGFSGQILFERWCIGLYNVMFTAMPPLTLGIFERSCRKEYMLKYPELYKTSQNALDFNTKVFWVHCLNGLFHSVILFWFPLKALQYGTVFENGRTSDYLLLGNFVYTFVVITVCLKAGLETSYWTWFSHIAIWGSIALWVVFFGIYSSLWPAVPMAPDMSGEAAMLFSSGVFWMGLLFIPVASLLLDVVYKVIKRTAFKTLVDEVQELEAKSQDPGAVVLGKSLTERAQLLKNVFKKNHVNLYRSESLQQNLLHGYAFSQDENGIVSQSEVIRAYDTTKQRPDEW.

Residues 1–65 (MPTMRRTVSE…TAKYNIITFL (65 aa)) lie on the Cytoplasmic side of the membrane. Serine 25 is subject to Phosphoserine. Threonine 28 bears the Phosphothreonine mark. Serine 29 carries the post-translational modification Phosphoserine. The chain crosses the membrane as a helical span at residues 66–86 (PRFLYSQFRRAANSFFLFIAL). At 87 to 92 (LQQIPD) the chain is on the extracellular side. A helical membrane pass occupies residues 93–115 (VSPTGRYTTLVPLLFILAVAAIK). Over 116–297 (EIIEDIKRHK…SNVERITNVQ (182 aa)) the chain is Cytoplasmic. The helical transmembrane segment at 298–319 (ILILFCILIAMSLVCSVGSAIW) threads the bilayer. The Extracellular segment spans residues 320–344 (NRRHSGRDWYLNLNYGGANNFGLNF). A helical membrane pass occupies residues 345-366 (LTFIILFNNLIPISLLVTLEVV). The Cytoplasmic portion of the chain corresponds to 367–842 (KFTQAYFINW…GAWNYNRGSK (476 aa)). Aspartate 409 serves as the catalytic 4-aspartylphosphate intermediate. Residues aspartate 409, lysine 410, threonine 411, glutamate 493, phenylalanine 534, lysine 557, arginine 590, threonine 670, glycine 671, aspartate 672, 726–733 (ALIIDGKT), arginine 760, and lysine 766 contribute to the ATP site. A Mg(2+)-binding site is contributed by aspartate 409. Mg(2+) is bound at residue threonine 411. A Mg(2+)-binding site is contributed by aspartate 786. Residues asparagine 789 and aspartate 790 each coordinate ATP. Aspartate 790 is a binding site for Mg(2+). The helical transmembrane segment at 843–863 (CILYCFYKNIVLYIIEIWFAF) threads the bilayer. The Extracellular portion of the chain corresponds to 864–875 (VNGFSGQILFER). The helical transmembrane segment at 876–895 (WCIGLYNVMFTAMPPLTLGI) threads the bilayer. Residues 896–925 (FERSCRKEYMLKYPELYKTSQNALDFNTKV) lie on the Cytoplasmic side of the membrane. A helical transmembrane segment spans residues 926-947 (FWVHCLNGLFHSVILFWFPLKA). At 948-961 (LQYGTVFENGRTSD) the chain is on the extracellular side. The helical transmembrane segment at 962–984 (YLLLGNFVYTFVVITVCLKAGLE) threads the bilayer. Over 985 to 990 (TSYWTW) the chain is Cytoplasmic. A helical transmembrane segment spans residues 991–1011 (FSHIAIWGSIALWVVFFGIYS). Residues 1012-1029 (SLWPAVPMAPDMSGEAAM) lie on the Extracellular side of the membrane. Residues 1030 to 1055 (LFSSGVFWMGLLFIPVASLLLDVVYK) form a helical membrane-spanning segment. The Cytoplasmic portion of the chain corresponds to 1056-1149 (VIKRTAFKTL…DTTKQRPDEW (94 aa)). 1080-1087 (GAVVLGKS) provides a ligand contact to ATP. Serine 1111 bears the Phosphoserine mark.

The protein belongs to the cation transport ATPase (P-type) (TC 3.A.3) family. Type IV subfamily. As to quaternary structure, component of a P4-ATPase flippase complex which consists of a catalytic alpha subunit and an accessory beta subunit. Interacts with TMEM30A to form a flippase complex; this complex forms an intermediate phosphoenzyme. Interacts with TMEM30B; this interaction is reported conflictingly. It depends on Mg(2+) as a cofactor. Cleaved by calpain in a caspase- and calcium influx-dependent manner during platelet apoptosis leading to a 100 kDa polypeptide. Kidney.

Its subcellular location is the cytoplasmic vesicle. It localises to the secretory vesicle. The protein localises to the chromaffin granule membrane. The protein resides in the cytoplasmic granule. It is found in the cell membrane. Its subcellular location is the endoplasmic reticulum. It localises to the golgi apparatus. It carries out the reaction ATP + H2O + phospholipidSide 1 = ADP + phosphate + phospholipidSide 2.. The catalysed reaction is a 1,2-diacyl-sn-glycero-3-phospho-L-serine(out) + ATP + H2O = a 1,2-diacyl-sn-glycero-3-phospho-L-serine(in) + ADP + phosphate + H(+). Functionally, catalytic component of a P4-ATPase flippase complex which catalyzes the hydrolysis of ATP coupled to the transport of aminophospholipids from the outer to the inner leaflet of various membranes and ensures the maintenance of asymmetric distribution of phospholipids. Phospholipid translocation also seems to be implicated in vesicle formation and in uptake of lipid signaling molecules. In vitro, its ATPase activity is selectively and stereospecifically stimulated by phosphatidylserine (PS). The flippase complex ATP8A1:TMEM30A seems to play a role in regulation of cell migration probably involving flippase-mediated translocation of phosphatidylethanolamine (PE) at the cell membrane. Acts as aminophospholipid translocase at the cell membrane in neuronal cells. The chain is Probable phospholipid-transporting ATPase IA from Bos taurus (Bovine).